A 95-amino-acid polypeptide reads, in one-letter code: Small ribosomal subunit protein bS6 (95 aa).

This sequence belongs to the bacterial ribosomal protein bS6 family.

In terms of biological role, binds together with bS18 to 16S ribosomal RNA. The sequence is that of Small ribosomal subunit protein bS6 from Bacillus cytotoxicus (strain DSM 22905 / CIP 110041 / 391-98 / NVH 391-98).